Consider the following 273-residue polypeptide: MNDKHLPDASAENPWLPLRQLTPARIALGRTGTSLPTRPQLDFQYAHAQARDAVHLPFDHASIGDGLRQRGRDSLLLHSAAADRHVYLQRPDLGRRLDEASVRRLREHAAGYDGQIDLAIVVADGLSALAVQRHTLPFLERLEEQALAEGWSLSPVVLVEQGRVAVADEIGELLRARMSVILIGERPGLSSPDSLGLYFTWAPRVGLTDAYRNCISNVRLEGLSYGMAAHRLLYLMREACRRQLSGVNLKDEAEVQSLEGDAPRTGNFLLARD.

Adenosylcob(III)alamin contacts are provided by V164, E185, and C214.

Belongs to the EutC family. In terms of assembly, the basic unit is a heterodimer which dimerizes to form tetramers. The heterotetramers trimerize; 6 large subunits form a core ring with 6 small subunits projecting outwards. The cofactor is adenosylcob(III)alamin.

Its subcellular location is the bacterial microcompartment. The catalysed reaction is ethanolamine = acetaldehyde + NH4(+). It functions in the pathway amine and polyamine degradation; ethanolamine degradation. Its function is as follows. Catalyzes the deamination of various vicinal amino-alcohols to oxo compounds. Allows this organism to utilize ethanolamine as the sole source of nitrogen and carbon in the presence of external vitamin B12. The protein is Ethanolamine ammonia-lyase small subunit of Pseudomonas paraeruginosa (strain DSM 24068 / PA7) (Pseudomonas aeruginosa (strain PA7)).